We begin with the raw amino-acid sequence, 630 residues long: Triacylglycerol lipase ptl2 (630 aa).

The PNPLA domain occupies 251–442 (LCLSGGASFA…RTDIPLSELR (192 aa)). The short motif at 282 to 286 (GTSGG) is the GXSXG element. Serine 284 serves as the catalytic Nucleophile. The active-site Proton acceptor is aspartate 429.

The protein belongs to the PLPL family.

It is found in the lipid droplet. The enzyme catalyses a triacylglycerol + H2O = a diacylglycerol + a fatty acid + H(+). Lipid particle-localized triacylglycerol (TAG) lipase. The lipid droplet/particle is a lipid storage compartment which serves as a depot of energy and building blocks for membrane lipid biosynthesis. Involved in the mobilization of the non-polar storage lipids triacylglycerols (TAGs) from lipid particles by hydrolysis of TAGs, releasing and supplying specific fatty acids to the appropriate metabolic pathways. The chain is Triacylglycerol lipase ptl2 (ptl2) from Schizosaccharomyces pombe (strain 972 / ATCC 24843) (Fission yeast).